Reading from the N-terminus, the 1225-residue chain is uncharacterized protein (1225 aa).

The signal sequence occupies residues 1-27; that stretch reads MKRFLHRVKWPLLLSSIAVSLGIVAVA. Cys-28 is lipidated: N-palmitoyl cysteine. Cys-28 carries S-diacylglycerol cysteine lipidation. The interval 995 to 1014 is disordered; the sequence is QSEKSSSNGGQAQLQSTQSS.

This sequence belongs to the MG307/MG309/MG338 family.

The protein resides in the cell membrane. This is an uncharacterized protein from Mycoplasma genitalium (strain ATCC 33530 / DSM 19775 / NCTC 10195 / G37) (Mycoplasmoides genitalium).